A 399-amino-acid chain; its full sequence is Elongation factor Tu (399 aa).

The tr-type G domain maps to 10-204 (KPHVNIGTIG…AVDASIPEPE (195 aa)). The segment at 19–26 (GHVDHGKT) is G1. 19–26 (GHVDHGKT) contributes to the GTP binding site. Threonine 26 lines the Mg(2+) pocket. The interval 60–64 (GITIN) is G2. The tract at residues 81 to 84 (DCPG) is G3. GTP-binding positions include 81–85 (DCPGH) and 136–139 (NKCD). Residues 136–139 (NKCD) are G4. A G5 region spans residues 174-176 (SGL).

The protein belongs to the TRAFAC class translation factor GTPase superfamily. Classic translation factor GTPase family. EF-Tu/EF-1A subfamily. Monomer.

Its subcellular location is the cytoplasm. The enzyme catalyses GTP + H2O = GDP + phosphate + H(+). Functionally, GTP hydrolase that promotes the GTP-dependent binding of aminoacyl-tRNA to the A-site of ribosomes during protein biosynthesis. In Synechococcus sp. (strain CC9311), this protein is Elongation factor Tu.